The chain runs to 851 residues: mRNA-capping enzyme catalytic subunit (851 aa).

The triphosphatase-guanylyltransferase stretch occupies residues 1-544; that stretch reads MDKYISKTPL…EEEKLADIAA (544 aa). Mg(2+) is bound by residues Glu-38, Glu-40, Glu-199, and Glu-201. The active-site N6-GMP-lysine intermediate is the Lys-266. 554–555 contacts S-adenosyl-L-methionine; it reads LN. Positions 565–850 constitute an mRNA cap 0 methyltransferase domain; that stretch reads RVRGALGILS…HYMVYVFSKE (286 aa). 574-575 is a binding site for mRNA; sequence SN. S-adenosyl-L-methionine is bound by residues Lys-578, Asp-603, Asp-625, and 683-685; that span reads QFA.

It in the N-terminal section; belongs to the dsDNA virus mRNA guanylyltransferase family. The protein in the C-terminal section; belongs to the class I-like SAM-binding methyltransferase superfamily. mRNA cap 0 methyltransferase family. As to quaternary structure, heterodimer of a catalytic and a regulatory subunit. Intrinsic methyltransferase activity of the catalytic subunit is weak and needs to be stimulated 30- to 50-fold by the regulatory subunit, which is itself catalytically inert. The cofactor is Mg(2+).

Its subcellular location is the virion. The catalysed reaction is a 5'-end triphospho-ribonucleoside in mRNA + H2O = a 5'-end diphospho-ribonucleoside in mRNA + phosphate + H(+). It carries out the reaction a 5'-end diphospho-ribonucleoside in mRNA + GTP + H(+) = a 5'-end (5'-triphosphoguanosine)-ribonucleoside in mRNA + diphosphate. It catalyses the reaction a 5'-end (5'-triphosphoguanosine)-ribonucleoside in mRNA + S-adenosyl-L-methionine = a 5'-end (N(7)-methyl 5'-triphosphoguanosine)-ribonucleoside in mRNA + S-adenosyl-L-homocysteine. Catalytic subunit of the mRNA capping enzyme which catalyzes three enzymatic reactions: the 5' triphosphate end of the pre-mRNA is hydrolyzed to a diphosphate by RNA 5' triphosphatase; the diphosphate RNA end is capped with GMP by RNA guanylyltransferase and the GpppN cap is methylated by RNA (guanine-N7) methyltransferase. Heterodimeric mRNA capping enzyme catalyzes the linkage of a N7-methyl-guanosine moiety to the first transcribed nucleotide (cap 0 structure), whereas the polymerase associated VP39 is responsible for a second methylation at the 2'-O position of the ribose (cap 1 structure). Functionally, the heterodimeric enzyme is also involved in early viral gene transcription termination and intermediate viral gene transcription initiation. Early gene transcription termination requires the termination factor VTF, the DNA-dependent ATPase NPH-I and the Rap94 subunit of the viral RNA polymerase, as well as the presence of a specific termination motif. Binds, together with RAP94, to the termination motif 5'-UUUUUNU-3' in the nascent early mRNA. This Fowlpox virus (strain NVSL) (FPV) protein is mRNA-capping enzyme catalytic subunit.